Consider the following 126-residue polypeptide: Cystatin-like cysteine protease inhibitor EPIC1 (126 aa).

A signal peptide spans M1–A21. The N-linked (GlcNAc...) asparagine glycan is linked to N46. A Secondary area of contact motif is present at residues Q69–G73.

This sequence belongs to the cystatin family. In terms of assembly, interacts with the host papain-like cysteine protease RCR3. Interacts with the host papain-like cysteine protease C14.

Its subcellular location is the secreted. In terms of biological role, secreted effector that interacts with and inhibits the pathogenesis-related papain-like cysteine proteases C14 and RCR3 of host plants. Inhibition of host proteases by a pathogen extracellular protease inhibitor forms a specific type of defense-counterdefense mechanism between plants and microbial pathogens. The protein is Cystatin-like cysteine protease inhibitor EPIC1 of Phytophthora infestans (Potato late blight agent).